The primary structure comprises 214 residues: ER lumen protein-retaining receptor 3 (214 aa).

Residues 1-4 (MNVF) lie on the Lumenal side of the membrane. The chain crosses the membrane as a helical span at residues 5–24 (RILGDLSHLLAMILLLVKIW). Residues 25 to 32 (RSKSCAGI) lie on the Cytoplasmic side of the membrane. Residues 33 to 52 (SGKSQILFALVFTTRYLDLF) form a helical membrane-spanning segment. Positions 47–48 (RY) are interaction with the K-D-E-L motif on target proteins. The Lumenal segment spans residues 53–58 (SNFISI). A helical membrane pass occupies residues 59–79 (YNTVMKVVFLLCAYVTVYMIY). Topologically, residues 80–92 (WKFRKTFDIENDT) are cytoplasmic. Residues 93–110 (FRLEFLLVPVTGLSFLVN) traverse the membrane as a helical segment. At 111–116 (YSYTPM) the chain is on the lumenal side. A helical membrane pass occupies residues 117 to 135 (EVLWTFSIYLESVAILPQL). The Cytoplasmic segment spans residues 136–149 (FMISKTGEAETITT). A helical transmembrane segment spans residues 150–168 (HYLFFLGLYRLLYLANWIR). Residues 159 to 169 (RLLYLANWIRR) form an interaction with the K-D-E-L motif on target proteins region. At 169 to 178 (RYQTENFYDQ) the chain is on the lumenal side. Residues 179–199 (ISVVSGVVQTIFYCDFFYLYV) traverse the membrane as a helical segment. Residues 200–214 (TKVLKGKKLSLPVPV) lie on the Cytoplasmic side of the membrane. The tract at residues 204–207 (KGKK) is important for recycling of cargo proteins with the sequence motif K-D-E-L from the Golgi to the endoplasmic reticulum.

The protein belongs to the ERD2 family.

It is found in the endoplasmic reticulum membrane. It localises to the golgi apparatus membrane. Its subcellular location is the cytoplasmic vesicle. The protein localises to the COPI-coated vesicle membrane. Functionally, receptor for the C-terminal sequence motif K-D-E-L that is present on endoplasmic reticulum resident proteins and that mediates their recycling from the Golgi back to the endoplasmic reticulum. The sequence is that of ER lumen protein-retaining receptor 3 (Kdelr3) from Mus musculus (Mouse).